The sequence spans 229 residues: Potassium/proton antiporter CemA (229 aa).

The next 4 membrane-spanning stretches (helical) occupy residues 7–27, 106–126, 154–174, and 189–209; these read FIPF…YLSF, MILH…YSIL, ILLV…ELLI, and IISS…KYWI.

This sequence belongs to the CemA family.

It is found in the plastid. The protein localises to the chloroplast inner membrane. The catalysed reaction is K(+)(in) + H(+)(out) = K(+)(out) + H(+)(in). Contributes to K(+)/H(+) antiport activity by supporting proton efflux to control proton extrusion and homeostasis in chloroplasts in a light-dependent manner to modulate photosynthesis. Prevents excessive induction of non-photochemical quenching (NPQ) under continuous-light conditions. Indirectly promotes efficient inorganic carbon uptake into chloroplasts. This is Potassium/proton antiporter CemA from Spinacia oleracea (Spinach).